The primary structure comprises 945 residues: Leucine--tRNA ligase 1 (945 aa).

A 'HIGH' region motif is present at residues 42-52 (PYTNSPLHIGH). The short motif at 625 to 629 (KMSKS) is the 'KMSKS' region element. Lysine 628 serves as a coordination point for ATP.

Belongs to the class-I aminoacyl-tRNA synthetase family.

It is found in the cytoplasm. It catalyses the reaction tRNA(Leu) + L-leucine + ATP = L-leucyl-tRNA(Leu) + AMP + diphosphate. The chain is Leucine--tRNA ligase 1 from Sulfurisphaera tokodaii (strain DSM 16993 / JCM 10545 / NBRC 100140 / 7) (Sulfolobus tokodaii).